Consider the following 1117-residue polypeptide: Guanylate cyclase D (1117 aa).

Residues 1–66 (MAGLQQGCHF…ADSLSLLAWA (66 aa)) form the signal peptide. Residues 67-479 (RETFTLGVLG…CIRGVQPLGS (413 aa)) are Extracellular-facing. Cysteine 121 and cysteine 149 are disulfide-bonded. A helical transmembrane segment spans residues 480–500 (LLTLTIACVLALVGGFLAYFI). Over 501 to 1117 (RLGLQQLRLL…RKSGEAGPGP (617 aa)) the chain is Cytoplasmic. Residues 529 to 557 (TPSRRRPHVDSGSESRSVVDGGSPRSVTQ) form a disordered region. The region spanning 541–812 (SESRSVVDGG…PSLDQIYTQF (272 aa)) is the Protein kinase domain. Residues 874 to 915 (MGTTVEPEYFDQVTIYFSDIVGFTTISALSEPIEVVGFLNDL) form an interaction with NCALD region. Residues 887 to 1017 (TIYFSDIVGF…DTVNTASRME (131 aa)) form the Guanylate cyclase domain. Residues 1096–1117 (GFAKARQGLAEPRKSGEAGPGP) are disordered.

This sequence belongs to the adenylyl cyclase class-4/guanylyl cyclase family. As to quaternary structure, interacts (via the catalytic domain) with NCALD. In terms of tissue distribution, found in a subset of olfactory neurons in the main olfactory epithelium.

Its subcellular location is the cell projection. The protein resides in the cilium membrane. The catalysed reaction is GTP = 3',5'-cyclic GMP + diphosphate. With respect to regulation, activated by Ca(2+). Its function is as follows. Functions as an olfactory receptor activated by urine odorants, uroguanylin and guanylin and as well by the volatile semiochemicals carbon disulfide (CS2) and carbon dioxide (CO2). Has guanylate cyclase activity upon binding of the ligand. Activation of GUCY2D neurons leads to the cGMP-dependent activation of the CNGA3 channels, membrane depolarization and an increase in action potential frequency. Signaling pathways activated by GUCY2D may trigger social behaviors such as acquisition of food preference. The chain is Guanylate cyclase D from Mus musculus (Mouse).